The chain runs to 86 residues: Large ribosomal subunit protein eL43 (86 aa).

The C4-type zinc-finger motif lies at 38-59 (CPVCGRKAVRRISTGIWQCQKC).

It belongs to the eukaryotic ribosomal protein eL43 family. It depends on Zn(2+) as a cofactor.

The polypeptide is Large ribosomal subunit protein eL43 (Thermococcus onnurineus (strain NA1)).